Reading from the N-terminus, the 310-residue chain is Porphobilinogen deaminase (310 aa).

S-(dipyrrolylmethanemethyl)cysteine is present on C243.

This sequence belongs to the HMBS family. Monomer. Dipyrromethane is required as a cofactor.

The enzyme catalyses 4 porphobilinogen + H2O = hydroxymethylbilane + 4 NH4(+). Its pathway is porphyrin-containing compound metabolism; protoporphyrin-IX biosynthesis; coproporphyrinogen-III from 5-aminolevulinate: step 2/4. Its function is as follows. Tetrapolymerization of the monopyrrole PBG into the hydroxymethylbilane pre-uroporphyrinogen in several discrete steps. The protein is Porphobilinogen deaminase of Methylobacillus flagellatus (strain ATCC 51484 / DSM 6875 / VKM B-1610 / KT).